Here is a 186-residue protein sequence, read N- to C-terminus: Adenine phosphoribosyltransferase (186 aa).

This sequence belongs to the purine/pyrimidine phosphoribosyltransferase family. Homodimer.

Its subcellular location is the cytoplasm. It carries out the reaction AMP + diphosphate = 5-phospho-alpha-D-ribose 1-diphosphate + adenine. The protein operates within purine metabolism; AMP biosynthesis via salvage pathway; AMP from adenine: step 1/1. Catalyzes a salvage reaction resulting in the formation of AMP, that is energically less costly than de novo synthesis. The polypeptide is Adenine phosphoribosyltransferase (Xanthomonas oryzae pv. oryzae (strain PXO99A)).